A 204-amino-acid chain; its full sequence is Methylthioribulose-1-phosphate dehydratase (204 aa).

Residues His94 and His96 each contribute to the Zn(2+) site.

It belongs to the aldolase class II family. MtnB subfamily. Zn(2+) is required as a cofactor.

The catalysed reaction is 5-(methylsulfanyl)-D-ribulose 1-phosphate = 5-methylsulfanyl-2,3-dioxopentyl phosphate + H2O. It participates in amino-acid biosynthesis; L-methionine biosynthesis via salvage pathway; L-methionine from S-methyl-5-thio-alpha-D-ribose 1-phosphate: step 2/6. Functionally, catalyzes the dehydration of methylthioribulose-1-phosphate (MTRu-1-P) into 2,3-diketo-5-methylthiopentyl-1-phosphate (DK-MTP-1-P). In Enterobacter sp. (strain 638), this protein is Methylthioribulose-1-phosphate dehydratase.